Reading from the N-terminus, the 444-residue chain is Jacalin-related lectin 11 (444 aa).

N-acetylalanine is present on Ala2. 3 consecutive Jacalin-type lectin domains span residues 2-143 (ALKV…YFIK), 146-290 (SIQS…YYAP), and 298-442 (PEKL…HVTA).

The protein belongs to the jacalin lectin family.

This Arabidopsis thaliana (Mouse-ear cress) protein is Jacalin-related lectin 11 (JAL11).